The following is a 311-amino-acid chain: Malate dehydrogenase (311 aa).

Residues glycine 7–glycine 13 and aspartate 34 contribute to the NAD(+) site. Substrate is bound by residues arginine 81 and arginine 87. Residues asparagine 94 and isoleucine 117–asparagine 119 contribute to the NAD(+) site. Asparagine 119 and arginine 153 together coordinate substrate. Histidine 177 functions as the Proton acceptor in the catalytic mechanism. Residue methionine 227 coordinates NAD(+).

Belongs to the LDH/MDH superfamily. MDH type 1 family. Homodimer.

The catalysed reaction is (S)-malate + NAD(+) = oxaloacetate + NADH + H(+). Its function is as follows. Catalyzes the reversible oxidation of malate to oxaloacetate. The polypeptide is Malate dehydrogenase (Shewanella woodyi (strain ATCC 51908 / MS32)).